The sequence spans 359 residues: 3-dehydroquinate synthase (359 aa).

NAD(+) is bound by residues 72–77 (EGEIHK), 106–110 (GVIGD), 130–131 (TS), lysine 143, lysine 152, and 170–173 (CLKT). Positions 185, 248, and 264 each coordinate Zn(2+).

Belongs to the sugar phosphate cyclases superfamily. Dehydroquinate synthase family. It depends on Co(2+) as a cofactor. Requires Zn(2+) as cofactor. NAD(+) is required as a cofactor.

It localises to the cytoplasm. It catalyses the reaction 7-phospho-2-dehydro-3-deoxy-D-arabino-heptonate = 3-dehydroquinate + phosphate. The protein operates within metabolic intermediate biosynthesis; chorismate biosynthesis; chorismate from D-erythrose 4-phosphate and phosphoenolpyruvate: step 2/7. Functionally, catalyzes the conversion of 3-deoxy-D-arabino-heptulosonate 7-phosphate (DAHP) to dehydroquinate (DHQ). This Dehalococcoides mccartyi (strain ATCC BAA-2266 / KCTC 15142 / 195) (Dehalococcoides ethenogenes (strain 195)) protein is 3-dehydroquinate synthase.